The primary structure comprises 763 residues: Dual specificity tyrosine-phosphorylation-regulated kinase 1A (763 aa).

Ser-14 carries the post-translational modification Phosphoserine. The tract at residues 33–56 (QMPHSHQYSDRRQPNISDQQVSAL) is disordered. Polar residues predominate over residues 46-56 (PNISDQQVSAL). Phosphotyrosine; by autocatalysis is present on Tyr-111. Positions 115-136 (KKRRHQQGQGDDSSHKKERKVY) are disordered. The Bipartite nuclear localization signal signature appears at 117–134 (RRHQQGQGDDSSHKKERK). At Tyr-140 the chain carries Phosphotyrosine; by autocatalysis. Residue Tyr-145 is modified to Phosphotyrosine. The residue at position 159 (Tyr-159) is a Phosphotyrosine; by autocatalysis. A Protein kinase domain is found at 159-479 (YEIDSLIGKG…PYYALQHSFF (321 aa)). Position 165-173 (165-173 (IGKGSFGQV)) interacts with ATP. Tyr-177 is subject to Phosphotyrosine; by autocatalysis. Lys-188 lines the ATP pocket. Tyr-219 is modified (phosphotyrosine; by autocatalysis). 238–241 (FEML) contacts ATP. Asp-287 functions as the Proton acceptor in the catalytic mechanism. The residue at position 310 (Ser-310) is a Phosphoserine; by autocatalysis. Phosphotyrosine; by autocatalysis occurs at positions 319 and 321. Thr-402 is modified (phosphothreonine; by autocatalysis). Residues 408–442 (TKDGKREYKPPGTRKLHNILGVETGGPGGRRAGES) form a disordered region. Residue Tyr-449 is modified to Phosphotyrosine; by autocatalysis. Residues 485-501 (EGTNTSNSVSTSPAMEQ) show a composition bias toward polar residues. 3 disordered regions span residues 485 to 540 (EGTN…HSGG), 596 to 679 (NALH…GNQA), and 744 to 763 (DREESPMTGVCVQQSPVASS). Low complexity predominate over residues 502-525 (SQSSGTTSSTSSSSGGSSGTSNSG). Residues Ser-529 and Ser-538 each carry the phosphoserine modification. The tract at residues 595–625 (QNALHHHHGNSSHHHHHHHHHHHHHGQQALG) is histidine-rich domain (HRD). A compositionally biased stretch (basic residues) spans 598-620 (LHHHHGNSSHHHHHHHHHHHHHG). Polar residues predominate over residues 634 to 645 (NSPTNSSSTQDS). The span at 654 to 672 (SMTSLSSSTTSSSTSSSST) shows a compositional bias: low complexity. Ser-748 and Ser-758 each carry phosphoserine. Over residues 754–763 (CVQQSPVASS) the composition is skewed to polar residues.

This sequence belongs to the protein kinase superfamily. CMGC Ser/Thr protein kinase family. MNB/DYRK subfamily. As to quaternary structure, interacts with RAD54L2/ARIP4. Interacts with CRY2. Interacts with RANBP9. Interacts with WDR68. Interacts with SIRT1. Can also autophosphorylate on serine and threonine residues (in vitro). Autophosphorylated on numerous tyrosine residues. As to expression, detected in brain (at protein level). Ubiquitous.

The protein localises to the nucleus speckle. It catalyses the reaction L-seryl-[protein] + ATP = O-phospho-L-seryl-[protein] + ADP + H(+). It carries out the reaction L-threonyl-[protein] + ATP = O-phospho-L-threonyl-[protein] + ADP + H(+). The enzyme catalyses L-tyrosyl-[protein] + ATP = O-phospho-L-tyrosyl-[protein] + ADP + H(+). The catalysed reaction is [DNA-directed RNA polymerase] + ATP = phospho-[DNA-directed RNA polymerase] + ADP + H(+). With respect to regulation, inhibited by RANBP9. Inhibited by harmine, leucettamine B and leucettine L41. Functionally, dual-specificity kinase which possesses both serine/threonine and tyrosine kinase activities. Exhibits a substrate preference for proline at position P+1 and arginine at position P-3. Plays an important role in double-strand breaks (DSBs) repair following DNA damage. Mechanistically, phosphorylates RNF169 and increases its ability to block accumulation of TP53BP1 at the DSB sites thereby promoting homologous recombination repair (HRR). Also acts as a positive regulator of transcription by acting as a CTD kinase that mediates phosphorylation of the CTD (C-terminal domain) of the large subunit of RNA polymerase II (RNAP II) POLR2A. May play a role in a signaling pathway regulating nuclear functions of cell proliferation. Modulates alternative splicing by phosphorylating the splice factor SRSF6. Has pro-survival function and negatively regulates the apoptotic process. Promotes cell survival upon genotoxic stress through phosphorylation of SIRT1. This in turn inhibits p53/TP53 activity and apoptosis. Phosphorylates SEPTIN4, SEPTIN5 and SF3B1 at 'Thr-434'. The polypeptide is Dual specificity tyrosine-phosphorylation-regulated kinase 1A (Dyrk1a) (Rattus norvegicus (Rat)).